Consider the following 398-residue polypeptide: MMWLLLTTTCLICGTLNAGGFLDLENEVNPEVWMNTSEIIIYNGYPSEEYEVTTEDGYILLVNRIPYGRTHARSTGPRPVVYMQHALFADNAYWLENYANGSLGFLLADAGYDVWMGNSRGNTWSRRHKTLSETDEKFWAFSFDEMAKYDLPGVIDFIVNKTGQEKLYFIGHSLGTTIGFVAFSTMPELAQRIKMNFALGPTISFKYPTGIFTRFFLLPNSIIKAVFGTKGFFLEDKKTKIASTKICNNKILWLICSEFMSLWAGSNKKNMNQSRMDVYMSHAPTGSSVHNILHIKQLYHSDEFRAYDWGNDADNMKHYNQSHPPIYDLTAMKVPTAIWAGGHDVLVTPQDVARILPQIKSLHYFKLLPDWNHFDFVWGLDAPQRMYSEIIALMKAYS.

Positions 1–18 (MMWLLLTTTCLICGTLNA) are cleaved as a signal peptide. Positions 79–379 (PVVYMQHALF…DWNHFDFVWG (301 aa)) constitute an AB hydrolase-1 domain. Ser173 (nucleophile) is an active-site residue. An intrachain disulfide couples Cys247 to Cys256. A glycan (N-linked (GlcNAc...) asparagine) is linked at Asn272. Active-site charge relay system residues include Asp344 and His373.

It belongs to the AB hydrolase superfamily. Lipase family. Highly expressed in the epidermis in the granular keratinocytes. Also detected in other tissues, although at much lower levels, including lung and spleen.

It localises to the secreted. It carries out the reaction a sterol ester + H2O = a sterol + a fatty acid + H(+). It catalyses the reaction a triacylglycerol + H2O = a 1,2-diacylglycerol + a fatty acid + H(+). The enzyme catalyses a triacylglycerol + H2O = a diacylglycerol + a fatty acid + H(+). The catalysed reaction is a cholesterol ester + H2O = cholesterol + a fatty acid + H(+). In terms of biological role, plays a highly specific role in the last step of keratinocyte differentiation. Contains two distinct domains: the alpha/beta hydrolase fold and the abhydrolase-associated lipase region, also features the consensus sequence of the active site of a genuine lipase. May have an essential function in lipid metabolism of the most differentiated epidermal layers. The chain is Lipase member N (LIPN) from Homo sapiens (Human).